A 353-amino-acid chain; its full sequence is Probable protein phosphatase 2C 48 (353 aa).

The 295-residue stretch at 54 to 348 (FAAVCSRRGE…DDCSAICLFF (295 aa)) folds into the PPM-type phosphatase domain. Mn(2+)-binding residues include aspartate 90, glycine 91, aspartate 293, and aspartate 339.

Belongs to the PP2C family. Mg(2+) serves as cofactor. Mn(2+) is required as a cofactor.

The catalysed reaction is O-phospho-L-seryl-[protein] + H2O = L-seryl-[protein] + phosphate. It carries out the reaction O-phospho-L-threonyl-[protein] + H2O = L-threonyl-[protein] + phosphate. This chain is Probable protein phosphatase 2C 48, found in Oryza sativa subsp. japonica (Rice).